A 205-amino-acid polypeptide reads, in one-letter code: Adenylyl-sulfate kinase (205 aa).

31 to 38 (GLSGAGKS) contributes to the ATP binding site. The Phosphoserine intermediate role is filled by Ser-105.

The protein belongs to the APS kinase family.

The catalysed reaction is adenosine 5'-phosphosulfate + ATP = 3'-phosphoadenylyl sulfate + ADP + H(+). It participates in sulfur metabolism; hydrogen sulfide biosynthesis; sulfite from sulfate: step 2/3. In terms of biological role, catalyzes the synthesis of activated sulfate. This chain is Adenylyl-sulfate kinase, found in Shewanella oneidensis (strain ATCC 700550 / JCM 31522 / CIP 106686 / LMG 19005 / NCIMB 14063 / MR-1).